The chain runs to 1325 residues: RIMS-binding protein 2 (1325 aa).

The interval 153-181 (TFLSKSRSDTPRCRFDSDMDNDQNSNTSK) is disordered. Residues 158 to 169 (SRSDTPRCRFDS) are compositionally biased toward basic and acidic residues. The SH3 1 domain occupies 186–253 (GKVHLCIARY…PSNFVDFVQD (68 aa)). Fibronectin type-III domains lie at 315–408 (VPYP…GKDV), 411–493 (APSN…KKEA), and 507–608 (PPQD…VPPS). Disordered stretches follow at residues 601–778 (SDLL…GSDL), 988–1010 (DLGS…KKYE), and 1040–1090 (AAGP…SRPM). Positions 627–641 (ETKEEHLGPHLKIDE) are enriched in basic and acidic residues. Polar residues predominate over residues 664–676 (FPSSLQGRRSPSP). A compositionally biased stretch (basic and acidic residues) spans 696–716 (MAREAAQRVAESNRMERRSVF). The segment covering 717 to 727 (SERSNAAQYAN) has biased composition (polar residues). 2 stretches are compositionally biased toward basic and acidic residues: residues 763–774 (CHGEDYHTESSR) and 996–1010 (PRSE…KKYE). 2 SH3 domains span residues 1121-1189 (ISTR…EIQA) and 1225-1292 (VSTR…EVPD).

The protein belongs to the RIMBP family. In terms of assembly, interacts with RIMS1, RIMS2, CACNA1D and CACNA1B, and potentially with other Ca(2+) channel alpha-1 isoforms. In terms of tissue distribution, brain, cochlea and retina.

It localises to the cell membrane. The protein localises to the synapse. In terms of biological role, plays a role in the synaptic transmission as bifunctional linker that interacts simultaneously with RIMS1, RIMS2, CACNA1D and CACNA1B. The polypeptide is RIMS-binding protein 2 (RIMBP2) (Gallus gallus (Chicken)).